The sequence spans 318 residues: Mitochondrial fission regulator 1 (318 aa).

Disordered regions lie at residues 101-121 and 154-193; these read RPLR…AQQS and QEQS…PSMQ. Residues 124 to 157 are a coiled coil; that stretch reads VINDEAIQKISVLETELAKLRAQIAQIVQAQEQS. A compositionally biased stretch (low complexity) spans 154 to 164; that stretch reads QEQSAQSTAPA. Positions 165–189 are enriched in pro residues; the sequence is PGGPPVPPPMVPVPPPPPPPPPCPT. The interval 168 to 296 is necessary and sufficient to promote mitochondrial fission; the sequence is PPVPPPMVPV…TFTFTAFENK (129 aa).

This sequence belongs to the MTFR1 family.

The protein localises to the mitochondrion. Functionally, may play a role in mitochondrial aerobic respiration. May also regulate mitochondrial organization and fission. This chain is Mitochondrial fission regulator 1 (mtfr1), found in Danio rerio (Zebrafish).